A 627-amino-acid polypeptide reads, in one-letter code: tRNA uridine 5-carboxymethylaminomethyl modification enzyme MnmG (627 aa).

14–19 (GAGHAG) is an FAD binding site. 275-289 (GPRYCPSIEDKVVKF) provides a ligand contact to NAD(+).

It belongs to the MnmG family. Homodimer. Heterotetramer of two MnmE and two MnmG subunits. It depends on FAD as a cofactor.

The protein localises to the cytoplasm. In terms of biological role, NAD-binding protein involved in the addition of a carboxymethylaminomethyl (cmnm) group at the wobble position (U34) of certain tRNAs, forming tRNA-cmnm(5)s(2)U34. This chain is tRNA uridine 5-carboxymethylaminomethyl modification enzyme MnmG, found in Lachnoclostridium phytofermentans (strain ATCC 700394 / DSM 18823 / ISDg) (Clostridium phytofermentans).